The sequence spans 792 residues: Ribonucleoside-diphosphate reductase large subunit (792 aa).

In terms of domain architecture, ATP-cone spans 1 to 92; it reads MHVIKRDGRQ…VSNLHKETKK (92 aa). Residues 5-6, 11-17, T53, and D57 each bind ATP; these read KR and ERVMFDK. At K17 the chain carries N6-acetyllysine. Residues S202 and S217 each contribute to the GDP site. C218 and C444 are oxidised to a cystine. DTTP-binding positions include 226–228, K243, R256, and 263–264; these read DSI and AG. Residue K376 is modified to N6-acetyllysine. Residue N427 coordinates GDP. N427 serves as the catalytic Proton acceptor. C429 acts as the Cysteine radical intermediate in catalysis. Residues E431 and 604–607 contribute to the GDP site; that span reads TAST. E431 (proton acceptor) is an active-site residue. T751 bears the Phosphothreonine mark.

It belongs to the ribonucleoside diphosphate reductase large chain family. In terms of assembly, heterodimer of a large and a small subunit. Heterodimer with small subunit RRM2 or RRM2B. The heterodimer with RRM2 has higher catalytic activity than the heterodimer with RRM2B. Interacts with AHCYL1 which inhibits its activity.

It localises to the cytoplasm. The catalysed reaction is a 2'-deoxyribonucleoside 5'-diphosphate + [thioredoxin]-disulfide + H2O = a ribonucleoside 5'-diphosphate + [thioredoxin]-dithiol. Under complex allosteric control mediated by deoxynucleoside triphosphates and ATP binding to separate specificity and activation sites on the M1 subunit. The type of nucleotide bound at the specificity site determines substrate preference. It seems probable that ATP makes the enzyme reduce CDP and UDP, dGTP favors ADP reduction and dTTP favors GDP reduction. Stimulated by ATP and inhibited by dATP binding to the activity site, the dATP inhibition is mediated by AHCYL1 which stabilizes dATP in the site. Functionally, provides the precursors necessary for DNA synthesis. Catalyzes the biosynthesis of deoxyribonucleotides from the corresponding ribonucleotides. The chain is Ribonucleoside-diphosphate reductase large subunit (RRM1) from Homo sapiens (Human).